We begin with the raw amino-acid sequence, 985 residues long: Na(+)/H(+) antiporter (985 aa).

Over 1–12 the chain is Cytoplasmic; it reads MAIWEQLEVSKA. Residues 13–33 form a helical membrane-spanning segment; sequence HVAYACVGVFSSIFSLVSLYV. Over 34 to 36 the chain is Extracellular; sequence KEK. The chain crosses the membrane as a helical span at residues 37 to 57; it reads LYIGESTVAGIFGLIVGPVCL. Over 58 to 70 the chain is Cytoplasmic; that stretch reads NWFNPLKWGNSDS. Residues 71–91 form a helical membrane-spanning segment; that stretch reads ITLEITRIVLCLQIFAVAVEL. Residues 92–105 are Extracellular-facing; that stretch reads PRKYMLKHWVSVTM. The chain crosses the membrane as a helical span at residues 106–126; that stretch reads LLLPVMTAGWLIIGLFVWILI. The Cytoplasmic segment spans residues 127–128; that stretch reads PG. A helical membrane pass occupies residues 129–149; sequence LNFSASLLISACITATDPILA. Residues 150 to 176 are Extracellular-facing; it reads QSVVSGKFAQRVPGHLRNLLSAESGCN. Residues 177-197 form a helical membrane-spanning segment; sequence DGMAFPFLFLSMNLILHPGNG. The Cytoplasmic portion of the chain corresponds to 198-203; that stretch reads REIVKD. The helical transmembrane segment at 204 to 224 threads the bilayer; that stretch reads WICVTILYECLFGCLLGCFIG. The Extracellular portion of the chain corresponds to 225-244; that stretch reads YVGRITIRFAEKKNIIDRES. Residues 245 to 265 traverse the membrane as a helical segment; it reads FLAFYVVLAFMCAGFGSILGV. Residues 266–294 are Cytoplasmic-facing; sequence DDLLVSFAAGATFAWDGWFSQKTQESNVS. A helical transmembrane segment spans residues 295 to 315; the sequence is TVIDLLLNYAYFIYFGAIIPW. Residues 316 to 319 are Extracellular-facing; the sequence is SQFN. The chain crosses the membrane as a helical span at residues 320 to 340; that stretch reads NGEIGTNVWRLIILSIVVIFL. Over 341 to 361 the chain is Cytoplasmic; that stretch reads RRIPAVMILRPLIPDIKSWRE. Residues 362 to 382 traverse the membrane as a helical segment; sequence ALFVGHFGPIGVGAIFAAILA. At 383 to 410 the chain is on the extracellular side; it reads RGELESTFSDEPTPLNVVPSKEESKHWQ. Residues 411-431 form a helical membrane-spanning segment; sequence LIACIWPITCFFIVTSIIVHG. Over 432–985 the chain is Cytoplasmic; the sequence is SSVAIITLGR…ALSKTLGLNK (554 aa). Disordered stretches follow at residues 489 to 701 and 726 to 760; these read MTLS…KPGT and DRNE…GGRL. The span at 517–526 shows a compositional bias: polar residues; sequence NNDQIGSVAT. A compositionally biased stretch (basic residues) spans 538-558; the sequence is PRRRKLSRKEKRLNRRQKLRN. Basic and acidic residues-rich tracts occupy residues 559-572 and 580-593; these read KGRE…KNEM and DLGR…KEAR. Serine 568 is modified (phosphoserine). The span at 637–646 shows a compositional bias: low complexity; sequence SFESSERSSS. A compositionally biased stretch (acidic residues) spans 661 to 675; the sequence is EETESEIESEDEMEN. Residues 676-698 are compositionally biased toward basic and acidic residues; sequence ESERSMASSEERRIRKMKEEEMK. The segment covering 743-756 has biased composition (low complexity); it reads SSLTTTMTNLSSSS. Position 765 is a phosphothreonine (threonine 765). 2 positions are modified to phosphoserine: serine 768 and serine 774. Residues 812 to 985 form a disordered region; it reads INPHKSDDDK…ALSKTLGLNK (174 aa). 2 stretches are compositionally biased toward basic and acidic residues: residues 815–828 and 854–863; these read HKSD…RPRN and DEEKAIEGPS. The span at 887 to 920 shows a compositional bias: acidic residues; the sequence is LDLEDEPSSEEDLGDSYNMDDSEDYDDNAYESET. Residues 970–979 show a composition bias toward low complexity; that stretch reads SAAVKSALSK.

Belongs to the fungal Na(+)/H(+) exchanger family.

It is found in the cell membrane. In terms of biological role, sodium export from cell, takes up external protons in exchange for internal sodium ions. Also capable of exporting potassium ions. The chain is Na(+)/H(+) antiporter (NHA1) from Saccharomyces cerevisiae (strain ATCC 204508 / S288c) (Baker's yeast).